A 251-amino-acid chain; its full sequence is Cytochrome c oxidase subunit 2 (251 aa).

The next 2 helical transmembrane spans lie at 42-62 and 83-103; these read NIMFYLFIILGLVSWMLFTIV and IIWTMFPAVILLIIAFPSFIL. Cu cation is bound by residues H186, C221, E223, C225, H229, and M232. A Mg(2+)-binding site is contributed by E223.

Belongs to the cytochrome c oxidase subunit 2 family. In terms of assembly, component of the cytochrome c oxidase (complex IV, CIV), a multisubunit enzyme composed of a catalytic core of 3 subunits and several supernumerary subunits. The complex exists as a monomer or a dimer and forms supercomplexes (SCs) in the inner mitochondrial membrane with ubiquinol-cytochrome c oxidoreductase (cytochrome b-c1 complex, complex III, CIII). It depends on Cu cation as a cofactor.

It localises to the mitochondrion inner membrane. The enzyme catalyses 4 Fe(II)-[cytochrome c] + O2 + 8 H(+)(in) = 4 Fe(III)-[cytochrome c] + 2 H2O + 4 H(+)(out). Functionally, component of the cytochrome c oxidase, the last enzyme in the mitochondrial electron transport chain which drives oxidative phosphorylation. The respiratory chain contains 3 multisubunit complexes succinate dehydrogenase (complex II, CII), ubiquinol-cytochrome c oxidoreductase (cytochrome b-c1 complex, complex III, CIII) and cytochrome c oxidase (complex IV, CIV), that cooperate to transfer electrons derived from NADH and succinate to molecular oxygen, creating an electrochemical gradient over the inner membrane that drives transmembrane transport and the ATP synthase. Cytochrome c oxidase is the component of the respiratory chain that catalyzes the reduction of oxygen to water. Electrons originating from reduced cytochrome c in the intermembrane space (IMS) are transferred via the dinuclear copper A center (CU(A)) of subunit 2 and heme A of subunit 1 to the active site in subunit 1, a binuclear center (BNC) formed by heme A3 and copper B (CU(B)). The BNC reduces molecular oxygen to 2 water molecules using 4 electrons from cytochrome c in the IMS and 4 protons from the mitochondrial matrix. This is Cytochrome c oxidase subunit 2 (COX2) from Candida glabrata (strain ATCC 2001 / BCRC 20586 / JCM 3761 / NBRC 0622 / NRRL Y-65 / CBS 138) (Yeast).